The sequence spans 418 residues: cAMP-dependent protein kinase type II-beta regulatory subunit (418 aa).

Positions 2–153 (SIEIPAGLTE…RLQEACKDIL (152 aa)) are dimerization and phosphorylation. Over residues 45 to 57 (RKGTARFGHEGRT) the composition is skewed to basic and acidic residues. The disordered stretch occupies residues 45–98 (RKGTARFGHEGRTWGDAGAAGGGGTPSKGVNFAEEPRHSDSENGEEEEEEAADA). At Thr-69 the chain carries Phosphothreonine. Phosphoserine is present on residues Ser-83 and Ser-85. Residues 86–96 (ENGEEEEEEAA) are compositionally biased toward acidic residues. Ser-114 carries the phosphoserine modification. 3',5'-cyclic AMP is bound by residues 154–275 (LFKN…ESLP), Glu-223, Arg-232, 276–418 (FLKS…EPTA), Glu-352, and Arg-361.

This sequence belongs to the cAMP-dependent kinase regulatory chain family. The inactive form of the enzyme is composed of two regulatory chains and two catalytic chains. Activation by cAMP produces two active catalytic monomers and a regulatory dimer that binds four cAMP molecules. Interacts with PRKACA and PRKACB. Interacts with the phosphorylated form of PJA2. Forms a complex composed of PRKAR2B, GSK3B and GSKIP through GSKIP interaction; facilitates PKA-induced phosphorylation and regulates GSK3B activity. Post-translationally, phosphorylated by the activated catalytic chain. Four types of regulatory chains are found: I-alpha, I-beta, II-alpha, and II-beta. Their expression varies among tissues and is in some cases constitutive and in others inducible.

The protein resides in the cytoplasm. The protein localises to the cell membrane. Its function is as follows. Regulatory subunit of the cAMP-dependent protein kinases involved in cAMP signaling in cells. Type II regulatory chains mediate membrane association by binding to anchoring proteins, including the MAP2 kinase. The polypeptide is cAMP-dependent protein kinase type II-beta regulatory subunit (PRKAR2B) (Bos taurus (Bovine)).